The primary structure comprises 861 residues: ToMV resistance protein Tm-2(2) (861 aa).

Residues 63–83 are a coiled coil; that stretch reads VKNLLKDIQELAGDVEDLLDD. The region spanning 162-388 is the NB-ARC domain; the sequence is DDFNMLQAKL…LESMGHKVQD (227 aa). Position 185-192 (185-192) interacts with ATP; the sequence is GMPGLGKT. LRR repeat units lie at residues 225-248, 305-327, 388-411, 449-472, 510-536, 585-608, 609-631, 652-680, 689-710, 712-735, 736-758, 784-810, and 811-835; these read LDIAKQIGLTEQKMKENLEDNLRS, LHALQPLESEKSFELFTKKIFNF, DGCAKVLALSYNDLPIASRPCFLY, LAEDVLNDLVSRNLIQLAKRTYNG, VARLRRITFYSDNVMIEFFRSNPKLEK, MTCLRYLRLEGNICGKLPNSIVKL, TRLETIDIDRRSLIQPPSGVWES, ISSFYPNIYSLHPNNLQTLMWIPDKFFEP, LRKLGILGVSNSTVKMLSIFSP, LKALEVLKLSFSSDPSEQIKLSSY, PHIAKLHLNVNRTMALNSQSFPP, LRKLKMFICKYNEEKMDLSGEANGYSF, and PQLEVLHIHSPNGLSEVTCTDDVSM.

Belongs to the disease resistance NB-LRR family. In terms of assembly, (Microbial infection) Interacts with tobamoviruses mouvement protein (e.g. tobacco mosaic virus (TMV) MP, AC P03583) at the plasma membrane; this interaction triggers defense responses leading to programmed cell death. Binds to HSP90 proteins (e.g. HSP90-1 and Nicotiana benthamiana HSP90-1); this interaction seems required for defense responses toward tobamoviruses.

It is found in the cell membrane. Functionally, inhibitor of viral mouvements which confers resistance to some tobamoviruses including tomato mosaic virus (ToMV) (e.g. strains L, B7 and ToMV1-2) and tobacco mosaic virus (TMV), but not to resistance-breaking isolates (e.g. LIIA and ToMV2(2)) ToMV and tomato brown rugose fruit virus (ToBRFV). Elicits a hypersensitive reaction in response to avirulent (Avr) movement proteins from resistance inducing tobamoviruses (e.g. ToMV and TMV) strains, thus leading to programmed cell death; this local extreme resistance requires rbcS. This Solanum lycopersicum (Tomato) protein is ToMV resistance protein Tm-2(2).